A 378-amino-acid polypeptide reads, in one-letter code: Zinc finger protein DPF3 (378 aa).

Lys-99 is covalently cross-linked (Glycyl lysine isopeptide (Lys-Gly) (interchain with G-Cter in SUMO2)). Residues 145-193 (VLENDENVEEGNEEEDLEEDIPKRKNRTRGRARGSAGGRRRHDAASQED) form a disordered region. Positions 148–163 (NDENVEEGNEEEDLEE) are enriched in acidic residues. Residues 168-186 (RKNRTRGRARGSAGGRRRH) show a composition bias toward basic residues. A C2H2-type zinc finger spans residues 198–221 (YVCDICGKRYKNRPGLSYHYAHTH). The interval 225-254 (EEGDEAQDQETRSPPNHRNENHRPQKGPDG) is disordered. 2 PHD-type zinc fingers span residues 259-319 (NNYC…CKSC) and 316-366 (CKSC…CWEL). Residues 317-332 (KSCILCGTSENDDQLL) are interaction with HDGFL2. Gly-323 bears the Phosphoserine mark.

It belongs to the requiem/DPF family. As to quaternary structure, component of the BAF complex, which includes at least actin (ACTB), ARID1A, ARID1B/BAF250, SMARCA2, SMARCA4/BRG1/BAF190A, ACTL6A/BAF53, ACTL6B/BAF53B, SMARCE1/BAF57, SMARCC1/BAF155, SMARCC2/BAF170, SMARCB1/SNF5/INI1, and one or more of SMARCD1/BAF60A, SMARCD2/BAF60B, or SMARCD3/BAF60C. In muscle cells, the BAF complex also contains DPF3. Interacts with acetylated histones H3 and H4. Component of neuron-specific chromatin remodeling complex (nBAF complex) composed of at least, ARID1A/BAF250A or ARID1B/BAF250B, SMARCD1/BAF60A, SMARCD3/BAF60C, SMARCA2/BRM/BAF190B, SMARCA4/BRG1/BAF190A, SMARCB1/BAF47, SMARCC1/BAF155, SMARCE1/BAF57, SMARCC2/BAF170, DPF1/BAF45B, DPF3/BAF45C, ACTL6B/BAF53B and actin. Interacts with HDGFL2, SMARCA4/BRG1/BAF190A, SMARCC1/BAF155 and SMARCD1/BAF60A. In terms of processing, phosphorylation at Ser-323 enhances its interaction with HDGFL2.

The protein localises to the nucleus. Functionally, belongs to the neuron-specific chromatin remodeling complex (nBAF complex). During neural development a switch from a stem/progenitor to a post-mitotic chromatin remodeling mechanism occurs as neurons exit the cell cycle and become committed to their adult state. The transition from proliferating neural stem/progenitor cells to post-mitotic neurons requires a switch in subunit composition of the npBAF and nBAF complexes. As neural progenitors exit mitosis and differentiate into neurons, npBAF complexes which contain ACTL6A/BAF53A and PHF10/BAF45A, are exchanged for homologous alternative ACTL6B/BAF53B and DPF1/BAF45B or DPF3/BAF45C subunits in neuron-specific complexes (nBAF). The npBAF complex is essential for the self-renewal/proliferative capacity of the multipotent neural stem cells. The nBAF complex along with CREST plays a role regulating the activity of genes essential for dendrite growth. Muscle-specific component of the BAF complex, a multiprotein complex involved in transcriptional activation and repression of select genes by chromatin remodeling (alteration of DNA-nucleosome topology). Specifically binds acetylated lysines on histone 3 and 4 (H3K14ac, H3K9ac, H4K5ac, H4K8ac, H4K12ac, H4K16ac). In the complex, it acts as a tissue-specific anchor between histone acetylations and methylations and chromatin remodeling. It thereby probably plays an essential role in heart and skeletal muscle development. Acts as a regulator of myogenesis in cooperation with HDGFL2. Mediates the interaction of HDGFL2 with the BAF complex. HDGFL2-DPF3a activate myogenic genes by increasing chromatin accessibility through recruitment of SMARCA4/BRG1/BAF190A (ATPase subunit of the BAF complex) to myogenic gene promoters. In Homo sapiens (Human), this protein is Zinc finger protein DPF3 (DPF3).